The primary structure comprises 359 residues: Fructose-1,6-bisphosphatase class 1 (359 aa).

The Mg(2+) site is built by E95, D117, L119, and D120. Residues 120-123 (DGSS) and N212 contribute to the substrate site. A Mg(2+)-binding site is contributed by E284.

It belongs to the FBPase class 1 family. Homotetramer. The cofactor is Mg(2+).

The protein resides in the cytoplasm. It catalyses the reaction beta-D-fructose 1,6-bisphosphate + H2O = beta-D-fructose 6-phosphate + phosphate. Its pathway is carbohydrate biosynthesis; gluconeogenesis. This is Fructose-1,6-bisphosphatase class 1 from Hydrogenophilus thermoluteolus (Pseudomonas hydrogenothermophila).